Reading from the N-terminus, the 747-residue chain is NAD(P)H-quinone oxidoreductase subunit 5, chloroplastic (747 aa).

Helical transmembrane passes span 8–28 (AWIIPFVPLLVTMLIGLELLL), 39–59 (IWAFPAVLLLSIVMVFSTKLA), 89–109 (IDPLTSIMSILITTVGIMVLI), 125–145 (FAYMSFFNTAMLGLVTSPNLI), 147–167 (IHIFWELVGMCSYLLIGFWFT), 185–205 (GDFGLLLGILGFYLITGSFEF), 231–251 (AFLLFLGAVAKSAQFPLHVWL), 259–279 (TPISALIHAATMVAAGIFLVA), 281–301 (LLPLFIAIPYIMNIISLIGVI), 328–348 (LGYMMLALGIGSYRAALFHLI), 355–375 (ALLFLGSGSIIHSMEPIVGYS), 397–417 (TTFFLGTLSLCGIPPLACFWS), 426–446 (WLYSPIFAIIAFYTAGLTAFY), 550–570 (LFPLLILAIFTLFVGCIGIHF), 608–628 (FYSVSIAYFGIFLASVLYGSV), and 726–746 (LFLYLACVSIVLLIYYYYNFL).

This sequence belongs to the complex I subunit 5 family. NDH is composed of at least 16 different subunits, 5 of which are encoded in the nucleus.

It is found in the plastid. The protein localises to the chloroplast thylakoid membrane. The enzyme catalyses a plastoquinone + NADH + (n+1) H(+)(in) = a plastoquinol + NAD(+) + n H(+)(out). It catalyses the reaction a plastoquinone + NADPH + (n+1) H(+)(in) = a plastoquinol + NADP(+) + n H(+)(out). In terms of biological role, NDH shuttles electrons from NAD(P)H:plastoquinone, via FMN and iron-sulfur (Fe-S) centers, to quinones in the photosynthetic chain and possibly in a chloroplast respiratory chain. The immediate electron acceptor for the enzyme in this species is believed to be plastoquinone. Couples the redox reaction to proton translocation, and thus conserves the redox energy in a proton gradient. This Nymphaea alba (White water-lily) protein is NAD(P)H-quinone oxidoreductase subunit 5, chloroplastic (ndhF).